A 92-amino-acid chain; its full sequence is Defensin-like protein 249 (92 aa).

The signal sequence occupies residues 1 to 24; it reads MKLAAIFLASSVLLSLLPIHLSQG. 4 cysteine pairs are disulfide-bonded: cysteine 34–cysteine 91, cysteine 45–cysteine 74, cysteine 53–cysteine 84, and cysteine 72–cysteine 86.

The protein belongs to the DEFL family.

The protein localises to the secreted. This chain is Defensin-like protein 249 (SCRL7), found in Arabidopsis thaliana (Mouse-ear cress).